The following is a 717-amino-acid chain: Scinderin (717 aa).

Positions 1–363 (MAPERHPPAF…DGFGKVYVTE (363 aa)) are actin-severing. The Gelsolin-like 1 repeat unit spans residues 28-108 (ELVPVPPSRH…IQGYESNEFV (81 aa)). Residues 112-119 (KGGIKYKA) and 138-146 (RLLHIKGRR) each bind a 1,2-diacyl-sn-glycero-3-phospho-(1D-myo-inositol-4,5-bisphosphate). 5 Gelsolin-like repeats span residues 148 to 220 (VRAT…PDEL), 265 to 340 (VVAE…TPIF), 408 to 483 (RVPV…PHLL), 526 to 590 (AEVD…EEFW), and 628 to 703 (IEEV…PPTF). The interval 364-715 (RVAKIEQIEF…WFLAWDSNKW (352 aa)) is ca(2+)-dependent actin binding. Residues asparagine 538, aspartate 539, glutamate 562, aspartate 643, aspartate 644, and glutamate 666 each coordinate Ca(2+).

Belongs to the villin/gelsolin family.

It is found in the cytoplasm. The protein localises to the cytoskeleton. The protein resides in the cell projection. It localises to the podosome. Its function is as follows. Ca(2+)-dependent actin filament-severing protein that has a regulatory function in exocytosis by affecting the organization of the microfilament network underneath the plasma membrane. In vitro, also has barbed end capping and nucleating activities in the presence of Ca(2+). Severing activity is inhibited by phosphatidylinositol 4,5-bis-phosphate (PIP2). Required for megakaryocyte differentiation, maturation, polyploidization and apoptosis with the release of platelet-like particles. Plays a role in osteoclastogenesis (OCG) and actin cytoskeletal organization in osteoclasts. Regulates chondrocyte proliferation and differentiation. Inhibits cell proliferation and tumorigenesis. Signaling is mediated by MAPK, p38 and JNK pathways. The protein is Scinderin (SCIN) of Gallus gallus (Chicken).